We begin with the raw amino-acid sequence, 185 residues long: Elongation factor P (185 aa).

Belongs to the elongation factor P family.

The protein resides in the cytoplasm. It functions in the pathway protein biosynthesis; polypeptide chain elongation. Its function is as follows. Involved in peptide bond synthesis. Stimulates efficient translation and peptide-bond synthesis on native or reconstituted 70S ribosomes in vitro. Probably functions indirectly by altering the affinity of the ribosome for aminoacyl-tRNA, thus increasing their reactivity as acceptors for peptidyl transferase. In Bacillus cereus (strain 03BB102), this protein is Elongation factor P.